The chain runs to 478 residues: Ribulose bisphosphate carboxylase large chain (478 aa).

Residues 1 to 2 (MS) constitute a propeptide that is removed on maturation. Substrate is bound by residues Asn-123 and Thr-173. The active-site Proton acceptor is Lys-175. Lys-177 is a substrate binding site. Lys-201, Asp-203, and Glu-204 together coordinate Mg(2+). Lys-201 is modified (N6-carboxylysine). Residue Ser-208 is modified to Phosphoserine. His-294 (proton acceptor) is an active-site residue. Positions 295 and 327 each coordinate substrate. Thr-330 carries the post-translational modification Phosphothreonine. Ser-379 serves as a coordination point for substrate.

It belongs to the RuBisCO large chain family. Type I subfamily. In terms of assembly, heterohexadecamer of 8 large chains and 8 small chains; disulfide-linked. The disulfide link is formed within the large subunit homodimers. Requires Mg(2+) as cofactor. In terms of processing, the disulfide bond which can form in the large chain dimeric partners within the hexadecamer appears to be associated with oxidative stress and protein turnover.

The protein localises to the plastid. Its subcellular location is the chloroplast. The catalysed reaction is 2 (2R)-3-phosphoglycerate + 2 H(+) = D-ribulose 1,5-bisphosphate + CO2 + H2O. The enzyme catalyses D-ribulose 1,5-bisphosphate + O2 = 2-phosphoglycolate + (2R)-3-phosphoglycerate + 2 H(+). In terms of biological role, ruBisCO catalyzes two reactions: the carboxylation of D-ribulose 1,5-bisphosphate, the primary event in carbon dioxide fixation, as well as the oxidative fragmentation of the pentose substrate in the photorespiration process. Both reactions occur simultaneously and in competition at the same active site. This is Ribulose bisphosphate carboxylase large chain from Lepidium virginicum (Virginia pepperweed).